The following is a 426-amino-acid chain: Glutamate-1-semialdehyde 2,1-aminomutase (426 aa).

At Lys-265 the chain carries N6-(pyridoxal phosphate)lysine.

Belongs to the class-III pyridoxal-phosphate-dependent aminotransferase family. HemL subfamily. In terms of assembly, homodimer. Requires pyridoxal 5'-phosphate as cofactor.

The protein resides in the cytoplasm. It catalyses the reaction (S)-4-amino-5-oxopentanoate = 5-aminolevulinate. Its pathway is porphyrin-containing compound metabolism; protoporphyrin-IX biosynthesis; 5-aminolevulinate from L-glutamyl-tRNA(Glu): step 2/2. The sequence is that of Glutamate-1-semialdehyde 2,1-aminomutase from Methylococcus capsulatus (strain ATCC 33009 / NCIMB 11132 / Bath).